Consider the following 395-residue polypeptide: Type III polyketide synthase A (395 aa).

63-70 (KLEHLCKT) is a binding site for CoA. C172 (nucleophile) is an active-site residue. 224–225 (GD) contributes to the substrate binding site. CoA-binding positions include L274, 314-317 (GGPA), and A317.

Belongs to the thiolase-like superfamily. Chalcone/stilbene synthases family. As to quaternary structure, homodimer. Interacts with 4CLL1/ACOS5 and TKPR1. As to expression, expressed in flowers and flower buds (at protein level), and, at very low levels, in roots, seedlings, leaves and stems. Mostly confined to anther tapetal cells.

It localises to the endoplasmic reticulum. It participates in secondary metabolite biosynthesis; flavonoid biosynthesis. Plant type III polyketide synthases (PKSs) that catalyzes the condensation of malonyl-CoA units with various CoA ester starter molecules to generate a diverse array of natural products including long-chain alkyl alpha-pyrones. Accepts up to C(20) chain-length fatty acyl CoAs as starter substrates, and carries out sequential condensations with malonyl-CoA to produce triketide and tetraketide alpha-pyrones, potential sporopollenin precursors. Favorite substrates for are midchain- and v-hydroxylated fatty acyl-CoAs (e.g. 12-hydroxyoctadecanoyl-CoA and 16-hydroxyhexadecanoyl-CoA). Required for pollen development and sporopollenin biosynthesis, the major constituent of exine in the outer pollen wall. In vitro, can use 4-coumaroyl-coenzyme A as substrate to produce bis-noryangonin and fatty acyl-coenzyme A as substrate to produce medium-chain alkyl pyrones. May play a role in both the synthesis of pollen fatty acids and phenolics found in exine. This Arabidopsis thaliana (Mouse-ear cress) protein is Type III polyketide synthase A.